A 313-amino-acid chain; its full sequence is Ribosomal RNA small subunit methyltransferase H (313 aa).

S-adenosyl-L-methionine is bound by residues 34–36, Asp-55, Phe-82, Asp-103, and Gln-110; that span reads GGH.

This sequence belongs to the methyltransferase superfamily. RsmH family.

It is found in the cytoplasm. The catalysed reaction is cytidine(1402) in 16S rRNA + S-adenosyl-L-methionine = N(4)-methylcytidine(1402) in 16S rRNA + S-adenosyl-L-homocysteine + H(+). Its function is as follows. Specifically methylates the N4 position of cytidine in position 1402 (C1402) of 16S rRNA. This chain is Ribosomal RNA small subunit methyltransferase H, found in Pelobacter propionicus (strain DSM 2379 / NBRC 103807 / OttBd1).